Reading from the N-terminus, the 203-residue chain is UPF0637 protein SH1846 (203 aa).

It belongs to the UPF0637 family.

This chain is UPF0637 protein SH1846, found in Staphylococcus haemolyticus (strain JCSC1435).